Consider the following 66-residue polypeptide: Large ribosomal subunit protein bL33c (66 aa).

The protein belongs to the bacterial ribosomal protein bL33 family.

Its subcellular location is the plastid. It is found in the chloroplast. The protein is Large ribosomal subunit protein bL33c of Vitis vinifera (Grape).